The primary structure comprises 353 residues: uncharacterized protein (353 aa).

Positions 1-24 (MRVVERAVIACYLGITIFSGIAFG) are cleaved as a signal peptide.

Belongs to the chlamydial CPn_1058/CT_355/TC_0634 family.

This is an uncharacterized protein from Chlamydia trachomatis serovar D (strain ATCC VR-885 / DSM 19411 / UW-3/Cx).